A 205-amino-acid polypeptide reads, in one-letter code: LexA repressor (205 aa).

Residues R28–K48 constitute a DNA-binding region (H-T-H motif). Residues S122 and K159 each act as for autocatalytic cleavage activity in the active site.

It belongs to the peptidase S24 family. As to quaternary structure, homodimer.

The catalysed reaction is Hydrolysis of Ala-|-Gly bond in repressor LexA.. Its function is as follows. Represses a number of genes involved in the response to DNA damage (SOS response), including recA and lexA. In the presence of single-stranded DNA, RecA interacts with LexA causing an autocatalytic cleavage which disrupts the DNA-binding part of LexA, leading to derepression of the SOS regulon and eventually DNA repair. The chain is LexA repressor from Shewanella woodyi (strain ATCC 51908 / MS32).